The following is a 261-amino-acid chain: Small ribosomal subunit protein eS1B (261 aa).

Basic residues predominate over residues 1-18 (MTLGKNKRISKGGKRGKK). The segment at 1 to 23 (MTLGKNKRISKGGKRGKKKAQET) is disordered.

The protein belongs to the eukaryotic ribosomal protein eS1 family. Component of the small ribosomal subunit. Mature ribosomes consist of a small (40S) and a large (60S) subunit. The 40S subunit contains about 33 different proteins and 1 molecule of RNA (18S). The 60S subunit contains about 49 different proteins and 3 molecules of RNA (25S, 5.8S and 5S).

The protein resides in the cytoplasm. This Trypanosoma cruzi (strain CL Brener) protein is Small ribosomal subunit protein eS1B.